Reading from the N-terminus, the 117-residue chain is Galanin peptides (117 aa).

The first 19 residues, Met-1–Ser-19, serve as a signal peptide directing secretion. A propeptide spanning residues Glu-20–Glu-30 is cleaved from the precursor. Thr-61 carries the threonine amide modification.

Belongs to the galanin family.

It localises to the secreted. Endocrine hormone of the central and peripheral nervous systems that binds and activates the G protein-coupled receptors GALR1, GALR2, and GALR3. This small neuropeptide may regulate diverse physiologic functions including contraction of smooth muscle of the gastrointestinal and genitourinary tract, growth hormone and insulin release and adrenal secretion. In Coturnix japonica (Japanese quail), this protein is Galanin peptides (GAL).